A 537-amino-acid polypeptide reads, in one-letter code: Oocyte zinc finger protein XlCOF29 (537 aa).

A disordered region spans residues 1–21 (MGMSEKASDTGMKGKKKDKNE). C2H2-type zinc fingers lie at residues 375 to 397 (FTCS…LKSH), 403 to 425 (FSCS…RRLH), 431 to 453 (FPCA…SKTH), 459 to 481 (YSCT…KKRH), 487 to 509 (YTCS…VRIH), and 515 to 537 (FSCS…ERMH).

This sequence belongs to the krueppel C2H2-type zinc-finger protein family.

It is found in the nucleus. May be involved in transcriptional regulation. The protein is Oocyte zinc finger protein XlCOF29 of Xenopus laevis (African clawed frog).